Here is a 155-residue protein sequence, read N- to C-terminus: Small ribosomal subunit protein uS7 (155 aa).

Belongs to the universal ribosomal protein uS7 family. In terms of assembly, part of the 30S ribosomal subunit. Contacts proteins S9 and S11.

In terms of biological role, one of the primary rRNA binding proteins, it binds directly to 16S rRNA where it nucleates assembly of the head domain of the 30S subunit. Is located at the subunit interface close to the decoding center, probably blocks exit of the E-site tRNA. This Mesoplasma florum (strain ATCC 33453 / NBRC 100688 / NCTC 11704 / L1) (Acholeplasma florum) protein is Small ribosomal subunit protein uS7.